Consider the following 336-residue polypeptide: 4-aminobenzoate N-oxygenase (336 aa).

Tyr-93 contributes to the 4-nitrobenzoate binding site. Residues Glu-101, Glu-136, His-139, and Glu-196 each coordinate Fe cation. 4-nitrobenzoate is bound at residue Asn-200. Residues His-223, Glu-227, and His-230 each coordinate Fe cation.

This sequence belongs to the AurF N-oxygenase family. As to quaternary structure, homodimer. Requires Fe(2+) as cofactor.

It carries out the reaction 4-aminobenzoate + AH2 + 2 O2 = 4-nitrobenzoate + A + 2 H2O. The protein operates within antibiotic biosynthesis. Functionally, involved in the biosynthesis of the polyketide antibiotic aureothin. Catalyzes the oxidation of p-aminobenzoate (pABA) to p-nitrobenzoate (pNBA), an unusual polyketide synthase starter unit. Reaction mechanism involves the generation of a peroxodiiron(III/III) intermediate, which effects the initial oxidation of p-aminobenzoate to p-hydroxylaminobenzoate (Ar-NHOH). Ar-NHOH is then probably directly converted to the fully oxidized p-nitrobenzoate via a four-electron N-oxidation, bypassing the formation of a nitroso compound. In Streptomyces thioluteus, this protein is 4-aminobenzoate N-oxygenase.